Consider the following 298-residue polypeptide: Acetylglutamate kinase (298 aa).

Substrate-binding positions include 61–62 (GG), R83, and N188.

Belongs to the acetylglutamate kinase family. ArgB subfamily.

Its subcellular location is the cytoplasm. It carries out the reaction N-acetyl-L-glutamate + ATP = N-acetyl-L-glutamyl 5-phosphate + ADP. Its pathway is amino-acid biosynthesis; L-arginine biosynthesis; N(2)-acetyl-L-ornithine from L-glutamate: step 2/4. Catalyzes the ATP-dependent phosphorylation of N-acetyl-L-glutamate. This Syntrophobacter fumaroxidans (strain DSM 10017 / MPOB) protein is Acetylglutamate kinase.